The following is a 129-amino-acid chain: Small ribosomal subunit protein uS11 (129 aa).

It belongs to the universal ribosomal protein uS11 family. In terms of assembly, part of the 30S ribosomal subunit. Interacts with proteins S7 and S18. Binds to IF-3.

Located on the platform of the 30S subunit, it bridges several disparate RNA helices of the 16S rRNA. Forms part of the Shine-Dalgarno cleft in the 70S ribosome. This Anoxybacillus flavithermus (strain DSM 21510 / WK1) protein is Small ribosomal subunit protein uS11.